Consider the following 76-residue polypeptide: RNA-binding protein KhpA (76 aa).

The KH domain occupies 29 to 76; the sequence is SLTYKLSVSKEDMGRVIGKQGRIAKAIRTLVYAVGSKNDKKIRLEIIE.

Belongs to the KhpA RNA-binding protein family. As to quaternary structure, forms a complex with KhpB.

It is found in the cytoplasm. In terms of biological role, a probable RNA chaperone. Forms a complex with KhpB which binds to cellular RNA and controls its expression. Plays a role in peptidoglycan (PG) homeostasis and cell length regulation. The polypeptide is RNA-binding protein KhpA (Listeria innocua serovar 6a (strain ATCC BAA-680 / CLIP 11262)).